Here is a 289-residue protein sequence, read N- to C-terminus: (3R)-3-[(carboxymethyl)amino]fatty acid oxygenase/decarboxylase (289 aa).

The a (3R)-3-[(carboxymethyl)amino]fatty acid site is built by Tyr65, Tyr70, and Gly93. Residues His97 and Asp99 each coordinate Fe(2+). 2 residues coordinate a (3R)-3-[(carboxymethyl)amino]fatty acid: Tyr100 and Lys158. Residue His260 coordinates Fe(2+). Position 264 (His264) interacts with 2-oxoglutarate. Arg275 is an a (3R)-3-[(carboxymethyl)amino]fatty acid binding site.

Belongs to the TfdA dioxygenase family. Requires Fe(2+) as cofactor.

It carries out the reaction a (3R)-3-[(carboxymethyl)amino]fatty acid + 2 2-oxoglutarate + 2 O2 = a (3R)-3-isocyanyl-fatty acid + 2 succinate + 3 CO2 + 2 H2O. The enzyme catalyses a (3R)-3-[(carboxymethyl)amino]fatty acid + 2-oxoglutarate + O2 = a (3R)-3-{[carboxy(hydroxy)methyl]amino}fatty acid + succinate + CO2. It catalyses the reaction a (3R)-3-{[carboxy(hydroxy)methyl]amino}fatty acid + 2-oxoglutarate + O2 = a (3R)-3-isocyanyl-fatty acid + succinate + 2 CO2 + 2 H2O. Involved in the biosynthesis of a unique class of isonitrile lipopeptides (INLPs) that seem to play a role in metal acquisition in M.marinum. Catalyzes the conversion of (3R)-3-[(carboxymethyl)amino]fatty acids to (3R)-3-isocyanyl-fatty acids through an oxidative decarboxylation mechanism, thereby generating the isonitrile group of INLPs. This chain is (3R)-3-[(carboxymethyl)amino]fatty acid oxygenase/decarboxylase, found in Mycobacterium marinum (strain ATCC BAA-535 / M).